A 279-amino-acid polypeptide reads, in one-letter code: Tryptophan synthase alpha chain (279 aa).

Residues E50 and D61 each act as proton acceptor in the active site.

The protein belongs to the TrpA family. In terms of assembly, tetramer of two alpha and two beta chains.

It catalyses the reaction (1S,2R)-1-C-(indol-3-yl)glycerol 3-phosphate + L-serine = D-glyceraldehyde 3-phosphate + L-tryptophan + H2O. It functions in the pathway amino-acid biosynthesis; L-tryptophan biosynthesis; L-tryptophan from chorismate: step 5/5. In terms of biological role, the alpha subunit is responsible for the aldol cleavage of indoleglycerol phosphate to indole and glyceraldehyde 3-phosphate. The chain is Tryptophan synthase alpha chain from Brucella ovis (strain ATCC 25840 / 63/290 / NCTC 10512).